Reading from the N-terminus, the 106-residue chain is Large ribosomal subunit protein eL42 (106 aa).

Belongs to the eukaryotic ribosomal protein eL42 family. In terms of assembly, component of the large ribosomal subunit.

It is found in the cytoplasm. Functionally, component of the large ribosomal subunit. The ribosome is a large ribonucleoprotein complex responsible for the synthesis of proteins in the cell. The chain is Large ribosomal subunit protein eL42 (RPL36A) from Papio anubis (Olive baboon).